The following is a 181-amino-acid chain: Oligoribonuclease (181 aa).

Positions 8-171 (LIWIDLEMTG…DDIRESVAEL (164 aa)) constitute an Exonuclease domain. Residue Y129 is part of the active site.

Belongs to the oligoribonuclease family. Homodimer.

The protein localises to the cytoplasm. Functionally, 3'-to-5' exoribonuclease specific for small oligoribonucleotides. This chain is Oligoribonuclease, found in Escherichia coli O157:H7.